A 207-amino-acid polypeptide reads, in one-letter code: Ribosomal RNA large subunit methyltransferase E (207 aa).

Residues Gly61, Trp63, Asp81, Asp97, and Asp122 each contribute to the S-adenosyl-L-methionine site. Catalysis depends on Lys162, which acts as the Proton acceptor.

It belongs to the class I-like SAM-binding methyltransferase superfamily. RNA methyltransferase RlmE family.

The protein localises to the cytoplasm. It carries out the reaction uridine(2552) in 23S rRNA + S-adenosyl-L-methionine = 2'-O-methyluridine(2552) in 23S rRNA + S-adenosyl-L-homocysteine + H(+). Its function is as follows. Specifically methylates the uridine in position 2552 of 23S rRNA at the 2'-O position of the ribose in the fully assembled 50S ribosomal subunit. This chain is Ribosomal RNA large subunit methyltransferase E, found in Pseudomonas putida (strain ATCC 700007 / DSM 6899 / JCM 31910 / BCRC 17059 / LMG 24140 / F1).